A 467-amino-acid chain; its full sequence is Uronate isomerase (467 aa).

It belongs to the metallo-dependent hydrolases superfamily. Uronate isomerase family.

It carries out the reaction D-glucuronate = D-fructuronate. It catalyses the reaction aldehydo-D-galacturonate = keto-D-tagaturonate. The protein operates within carbohydrate metabolism; pentose and glucuronate interconversion. This Actinobacillus succinogenes (strain ATCC 55618 / DSM 22257 / CCUG 43843 / 130Z) protein is Uronate isomerase.